The sequence spans 91 residues: ATP synthase subunit c 2 (91 aa).

Helical transmembrane passes span F4–I24 and I53–L73.

Belongs to the ATPase C chain family. F-type ATPases have 2 components, F(1) - the catalytic core - and F(0) - the membrane proton channel. F(1) has five subunits: alpha(3), beta(3), gamma(1), delta(1), epsilon(1). F(0) has three main subunits: a(1), b(2) and c(10-14). The alpha and beta chains form an alternating ring which encloses part of the gamma chain. F(1) is attached to F(0) by a central stalk formed by the gamma and epsilon chains, while a peripheral stalk is formed by the delta and b chains.

The protein localises to the cell inner membrane. Its function is as follows. F(1)F(0) ATP synthase produces ATP from ADP in the presence of a proton or sodium gradient. F-type ATPases consist of two structural domains, F(1) containing the extramembraneous catalytic core and F(0) containing the membrane proton channel, linked together by a central stalk and a peripheral stalk. During catalysis, ATP synthesis in the catalytic domain of F(1) is coupled via a rotary mechanism of the central stalk subunits to proton translocation. In terms of biological role, key component of the F(0) channel; it plays a direct role in translocation across the membrane. A homomeric c-ring of between 10-14 subunits forms the central stalk rotor element with the F(1) delta and epsilon subunits. This is ATP synthase subunit c 2 from Pelobacter propionicus (strain DSM 2379 / NBRC 103807 / OttBd1).